A 463-amino-acid chain; its full sequence is Argininosuccinate lyase (463 aa).

It belongs to the lyase 1 family. Argininosuccinate lyase subfamily.

It is found in the cytoplasm. It carries out the reaction 2-(N(omega)-L-arginino)succinate = fumarate + L-arginine. It participates in amino-acid biosynthesis; L-arginine biosynthesis; L-arginine from L-ornithine and carbamoyl phosphate: step 3/3. The polypeptide is Argininosuccinate lyase (Thiobacillus denitrificans (strain ATCC 25259 / T1)).